The sequence spans 93 residues: MDGIRYAVFTDKSIQLLGKNQYTSNVESGSTRTEIKHWVELFFGVKVIAMNSHRLRGKARRMGPIMGQTMHYRRMIITLQPGYSIPPLRKKRT.

The protein belongs to the universal ribosomal protein uL23 family. As to quaternary structure, part of the 50S ribosomal subunit.

It localises to the plastid. Its subcellular location is the chloroplast. Functionally, binds to 23S rRNA. The sequence is that of Large ribosomal subunit protein uL23cz/uL23cy (rpl23-A) from Lactuca sativa (Garden lettuce).